A 465-amino-acid chain; its full sequence is 23S rRNA (uracil(1939)-C(5))-methyltransferase RlmD (465 aa).

A disordered region spans residues 1–24 (MSEAVPLSTRRASSAGDAPGRAPV). In terms of domain architecture, TRAM spans 16-80 (GDAPGRAPVL…PTYEQAQVVD (65 aa)). C93, C99, C102, and C181 together coordinate [4Fe-4S] cluster. S-adenosyl-L-methionine is bound by residues Q289, F318, N323, E339, N367, and D388. The active-site Nucleophile is the C421.

Belongs to the class I-like SAM-binding methyltransferase superfamily. RNA M5U methyltransferase family. RlmD subfamily.

The enzyme catalyses uridine(1939) in 23S rRNA + S-adenosyl-L-methionine = 5-methyluridine(1939) in 23S rRNA + S-adenosyl-L-homocysteine + H(+). Its function is as follows. Catalyzes the formation of 5-methyl-uridine at position 1939 (m5U1939) in 23S rRNA. This chain is 23S rRNA (uracil(1939)-C(5))-methyltransferase RlmD, found in Burkholderia mallei (strain ATCC 23344).